An 825-amino-acid polypeptide reads, in one-letter code: Actin filament-associated protein 1-like 2 (825 aa).

Tyrosine 56 bears the Phosphotyrosine mark. Residues 62–163 (VNGEQNSASP…SKGKAAPYQW (102 aa)) form a disordered region. Residues 80–94 (PLTNGEPSQHSSAPQ) show a composition bias toward polar residues. Threonine 113 carries the phosphothreonine modification. 2 PH domains span residues 175–271 (DARI…EVSG) and 353–447 (SLET…SESG). A Phosphoserine modification is found at serine 408. The residue at position 413 (tyrosine 413) is a Phosphotyrosine. Phosphoserine is present on serine 484. Positions 571–614 (TLTVDPKPGTTPEEPHTESPGDPEVQQRQPEVQESSEPIEPTPR) are disordered. Over residues 593 to 608 (PEVQQRQPEVQESSEP) the composition is skewed to low complexity. Positions 657–754 (AEIKLGKNRT…VKDNLKKAEA (98 aa)) form a coiled coil. A disordered region spans residues 757–801 (VTLGTTVDTTHLDNMSPRPQPKAATPNPPPDSTPVNSASVLKNRP). The span at 759–769 (LGTTVDTTHLD) shows a compositional bias: polar residues.

As to quaternary structure, interacts with SRC. Interacts with LCK when tyrosine phosphorylated. Post-translationally, tyrosine phosphorylated (by SRC).

Its subcellular location is the cytoplasm. Functionally, may play a role in a signaling cascade by enhancing the kinase activity of SRC. Contributes to SRC-regulated transcription activation. The protein is Actin filament-associated protein 1-like 2 (Afap1l2) of Mus musculus (Mouse).